The sequence spans 334 residues: Retinol dehydrogenase 13 (334 aa).

At serine 2 the chain carries N-acetylserine. Residue glycine 45–glycine 51 participates in NADP(+) binding. Residue serine 174 participates in substrate binding. Catalysis depends on tyrosine 200, which acts as the Proton acceptor.

Belongs to the short-chain dehydrogenases/reductases (SDR) family.

It localises to the mitochondrion inner membrane. The catalysed reaction is all-trans-retinol + NADP(+) = all-trans-retinal + NADPH + H(+). It participates in cofactor metabolism; retinol metabolism. Retinol dehydrogenase with a clear preference for NADP. Oxidizes all-trans-retinol, but seems to reduce all-trans-retinal with much higher efficiency. Has no activity towards steroid. The sequence is that of Retinol dehydrogenase 13 (Rdh13) from Mus musculus (Mouse).